The chain runs to 359 residues: Nicotinate-nucleotide--dimethylbenzimidazole phosphoribosyltransferase (359 aa).

The Proton acceptor role is filled by Glu318.

The protein belongs to the CobT family. In terms of assembly, homodimer.

It catalyses the reaction 5,6-dimethylbenzimidazole + nicotinate beta-D-ribonucleotide = alpha-ribazole 5'-phosphate + nicotinate + H(+). It functions in the pathway nucleoside biosynthesis; alpha-ribazole biosynthesis; alpha-ribazole from 5,6-dimethylbenzimidazole: step 1/2. In terms of biological role, catalyzes the synthesis of alpha-ribazole-5'-phosphate from nicotinate mononucleotide (NAMN) and 5,6-dimethylbenzimidazole (DMB). This is Nicotinate-nucleotide--dimethylbenzimidazole phosphoribosyltransferase from Escherichia coli O17:K52:H18 (strain UMN026 / ExPEC).